The primary structure comprises 21 residues: Glucan endo-1,3-beta-glucosidase 2 (21 aa).

A disordered region spans residues 1 to 21 (APGDLLWSDEFDGAAGSAPNP).

The catalysed reaction is Hydrolysis of (1-&gt;3)-beta-D-glucosidic linkages in (1-&gt;3)-beta-D-glucans.. The chain is Glucan endo-1,3-beta-glucosidase 2 from Papiliotrema laurentii (Cryptococcus laurentii).